Reading from the N-terminus, the 142-residue chain is MSSISSSSSNVRMDRRFDWVGPPDNLSKIRKIMLRRVDNESELERQYRLAREELNQWNSDFWAEHNQLFDRQKSDFVERKQQELGRLEHVSANELSEFYRDFLNDRHVAMMAYNKEWYRRNLQLIWPALKVNVVRFFRMARR.

The protein belongs to the COA8 family.

It localises to the mitochondrion inner membrane. Functionally, may be required for cytochrome c complex (COX) assembly and function, COX being the terminal component of the mitochondrial respiratory chain. In Caenorhabditis elegans, this protein is COA8 family protein Y39B6A.34, mitochondrial.